Consider the following 413-residue polypeptide: ATP phosphoribosyltransferase 2, chloroplastic (413 aa).

The transit peptide at 1–57 directs the protein to the chloroplast; it reads MPISIPLNATLQYSSPSSSSSSSSLVPSSPLFSPIPSTTVSLTGIRQRCLRMVTSCV.

Belongs to the ATP phosphoribosyltransferase family. Long subfamily. Mg(2+) is required as a cofactor.

The protein localises to the plastid. The protein resides in the chloroplast. The enzyme catalyses 1-(5-phospho-beta-D-ribosyl)-ATP + diphosphate = 5-phospho-alpha-D-ribose 1-diphosphate + ATP. Its pathway is amino-acid biosynthesis; L-histidine biosynthesis; L-histidine from 5-phospho-alpha-D-ribose 1-diphosphate: step 1/9. With respect to regulation, feedback inhibited by L-histidine. Functionally, catalyzes the condensation of ATP and 5-phosphoribose 1-diphosphate to form N'-(5'-phosphoribosyl)-ATP (PR-ATP). This chain is ATP phosphoribosyltransferase 2, chloroplastic (HISN1B), found in Arabidopsis thaliana (Mouse-ear cress).